The following is a 221-amino-acid chain: Glutathione S-transferase (221 aa).

The residue at position 1 (Met-1) is an N-acetylmethionine. Ala-2 bears the N-acetylalanine; in Glutathione S-transferase, N-terminally processed mark. The GST N-terminal domain maps to 3–82 (GEQNIKYFNI…YIAEKYNLLG (80 aa)). Glutathione-binding positions include Tyr-9, Lys-45, 53 to 54 (QV), and 66 to 67 (QT). One can recognise a GST C-terminal domain in the interval 84 to 208 (DMKEHAQIIM…PGSKRKPVPD (125 aa)).

It belongs to the GST superfamily. Alpha family. Homodimer or heterodimer of GSTA1 and GSTA2.

The protein resides in the cytoplasm. The enzyme catalyses RX + glutathione = an S-substituted glutathione + a halide anion + H(+). It carries out the reaction prostaglandin A2 + glutathione = prostaglandin A2-S-(R)-glutathione. The catalysed reaction is prostaglandin J2 + glutathione = prostaglandin J2-S-(R)-glutathione. It catalyses the reaction (13S)-hydroperoxy-(9Z,11E)-octadecadienoate + 2 glutathione = (13S)-hydroxy-(9Z,11E)-octadecadienoate + glutathione disulfide + H2O. The enzyme catalyses androst-5-ene-3,17-dione = androst-4-ene-3,17-dione. Glutathione S-transferase that catalyzes the nucleophilic attack of the sulfur atom of glutathione on the electrophilic groups of a wide range of exogenous and endogenous compounds. Involved in the formation of glutathione conjugates of both prostaglandin A2 (PGA2) and prostaglandin J2 (PGJ2). It also catalyzes the isomerization of D5-androstene-3,17-dione (AD) into D4-androstene-3,17-dione and may therefore play an important role in hormone biosynthesis. Through its glutathione-dependent peroxidase activity toward the fatty acid hydroperoxide (13S)-hydroperoxy-(9Z,11E)-octadecadienoate/13-HPODE it is also involved in the metabolism of oxidized linoleic acid. The sequence is that of Glutathione S-transferase from Antechinus stuartii (Brown marsupial mouse).